A 252-amino-acid chain; its full sequence is Hydroxyacylglutathione hydrolase (252 aa).

7 residues coordinate Zn(2+): histidine 52, histidine 54, aspartate 56, histidine 57, histidine 107, aspartate 128, and histidine 166.

This sequence belongs to the metallo-beta-lactamase superfamily. Glyoxalase II family. As to quaternary structure, monomer. Zn(2+) serves as cofactor.

The enzyme catalyses an S-(2-hydroxyacyl)glutathione + H2O = a 2-hydroxy carboxylate + glutathione + H(+). The protein operates within secondary metabolite metabolism; methylglyoxal degradation; (R)-lactate from methylglyoxal: step 2/2. Its function is as follows. Thiolesterase that catalyzes the hydrolysis of S-D-lactoyl-glutathione to form glutathione and D-lactic acid. This is Hydroxyacylglutathione hydrolase from Neisseria meningitidis serogroup C (strain 053442).